A 746-amino-acid polypeptide reads, in one-letter code: Dystrobrevin alpha (746 aa).

The interval 1-288 is interaction with MAGEE1; it reads MIEDSGKRGN…SHSNQHQMKE (288 aa). Residues 238–294 form a ZZ-type zinc finger; it reads FHPVECSYCHSESMMGFRYRCQQCHNYQLCQDCFWRGHAGGSHSNQHQMKEYTSWKS. Positions 243, 246, 258, 261, 267, 270, 280, and 284 each coordinate Zn(2+). The interval 397 to 447 is syntrophin-binding region; that stretch reads DRLADEHVLIGLYVNMLRNDPPCMLESSNRLDEEHRLIARYAARLAAESSS. Positions 458 to 557 form a coiled coil; the sequence is DISFTIDANK…KLLKEEELKQ (100 aa). Disordered regions lie at residues 555-577, 646-667, and 684-721; these read LKQG…SRPI, ETES…APSP, and YIHG…VRQL. The span at 563 to 576 shows a compositional bias: low complexity; it reads SSPRSSPSHTISRP. Position 666 is a phosphoserine (S666).

The protein belongs to the dystrophin family. Dystrobrevin subfamily. In terms of assembly, interacts with dystrophin, utrophin and the syntrophins SNTA1, SNTB1, SNTB2, SNTG1 and SNTG2. Binds dystrobrevin binding protein 1. Interacts with MAGEE1. Interacts with Ctnnal1. The interaction is required for correct localization of both Ctnnal1 and Dtna. As to quaternary structure, does not interact with utrophin. Does not interact with syntrophin. Phosphorylation of isoform 2 on tyrosine kinase substrate domain present in the C-terminus. As to expression, expressed in skeletal muscle, heart, lung and brain. Sarcolemma and neuromuscular junction in skeletal muscle. Isoform 2 is restricted to the neuromuscular junction. Isoforms 5 and 6 are only expressed in muscle.

The protein resides in the cytoplasm. It localises to the synapse. It is found in the cell membrane. Functionally, involved in synapse maturation and required for normal muscle function. In Mus musculus (Mouse), this protein is Dystrobrevin alpha (Dtna).